The sequence spans 525 residues: Vanin-like protein 2 (525 aa).

Residues 1–27 (MAKNYWGFFLFCLALGLMLNLSQQASL) form the signal peptide. Residues Asn20 and Asn61 are each glycosylated (N-linked (GlcNAc...) asparagine). Residues 33–303 (YTAGVVEFEP…RSIYVARVPK (271 aa)) enclose the CN hydrolase domain. Glu72 functions as the Proton acceptor in the catalytic mechanism. Asn99, Asn116, and Asn124 each carry an N-linked (GlcNAc...) asparagine glycan. Lys167 functions as the Proton donor in the catalytic mechanism. Asn176 carries N-linked (GlcNAc...) asparagine glycosylation. The active-site Nucleophile is Cys199. 3 N-linked (GlcNAc...) asparagine glycosylation sites follow: Asn333, Asn348, and Asn375.

The protein belongs to the carbon-nitrogen hydrolase superfamily. BTD/VNN family. As to expression, expressed in third instar larvae.

Its subcellular location is the secreted. The chain is Vanin-like protein 2 from Drosophila melanogaster (Fruit fly).